We begin with the raw amino-acid sequence, 617 residues long: Zinc finger protein 221 (617 aa).

The region spanning Val30 to Ser100 is the KRAB domain. 3 C2H2-type zinc fingers span residues Tyr170–His192, His198–His220, and Tyr226–His248. The C2H2-type 4; degenerate zinc-finger motif lies at Phe254–His276. 11 C2H2-type zinc fingers span residues Tyr282–His304, Phe310–His332, Phe338–His360, Tyr366–His388, Tyr394–His416, Phe422–His444, Tyr450–His472, Tyr478–His500, Phe506–His528, Tyr534–His556, and Tyr562–His584.

It belongs to the krueppel C2H2-type zinc-finger protein family.

It localises to the nucleus. In terms of biological role, may be involved in transcriptional regulation. This chain is Zinc finger protein 221 (ZNF221), found in Homo sapiens (Human).